Consider the following 469-residue polypeptide: Exodeoxyribonuclease 7 large subunit (469 aa).

It belongs to the XseA family. In terms of assembly, heterooligomer composed of large and small subunits.

The protein resides in the cytoplasm. The enzyme catalyses Exonucleolytic cleavage in either 5'- to 3'- or 3'- to 5'-direction to yield nucleoside 5'-phosphates.. Its function is as follows. Bidirectionally degrades single-stranded DNA into large acid-insoluble oligonucleotides, which are then degraded further into small acid-soluble oligonucleotides. The sequence is that of Exodeoxyribonuclease 7 large subunit from Mycoplasma mycoides subsp. mycoides SC (strain CCUG 32753 / NCTC 10114 / PG1).